The following is a 414-amino-acid chain: Putative competence-damage inducible protein (414 aa).

The protein belongs to the CinA family.

This is Putative competence-damage inducible protein from Clostridium novyi (strain NT).